The sequence spans 85 residues: Conotoxin Vx15a (85 aa).

The N-terminal stretch at 1 to 23 (MEKLTVLILVATVLLTIQVLAQS) is a signal peptide. A propeptide spanning residues 24–49 (DGDKHLMKRSKQYATKRLSALMRGHR) is cleaved from the precursor. The residue at position 50 (Gln-50) is a Pyrrolidone carboxylic acid.

This sequence belongs to the conotoxin O2 superfamily. Post-translationally, contains 4 disulfide bonds. As to expression, expressed by the venom duct.

The protein localises to the secreted. The chain is Conotoxin Vx15a from Conus vexillum (Flag cone).